The sequence spans 152 residues: Ribonuclease HI (152 aa).

The RNase H type-1 domain maps to 1–142 (MDSKVVIYTD…ADKLAVQGRE (142 aa)). Positions 10, 48, 70, and 134 each coordinate Mg(2+).

This sequence belongs to the RNase H family. As to quaternary structure, monomer. It depends on Mg(2+) as a cofactor.

It is found in the cytoplasm. The enzyme catalyses Endonucleolytic cleavage to 5'-phosphomonoester.. In terms of biological role, endonuclease that specifically degrades the RNA of RNA-DNA hybrids. The polypeptide is Ribonuclease HI (Rickettsia conorii (strain ATCC VR-613 / Malish 7)).